The primary structure comprises 352 residues: Protein RecA (352 aa).

An ATP-binding site is contributed by 74–81 (GPESSGKT).

It belongs to the RecA family.

It localises to the cytoplasm. Functionally, can catalyze the hydrolysis of ATP in the presence of single-stranded DNA, the ATP-dependent uptake of single-stranded DNA by duplex DNA, and the ATP-dependent hybridization of homologous single-stranded DNAs. It interacts with LexA causing its activation and leading to its autocatalytic cleavage. The sequence is that of Protein RecA from Ralstonia nicotianae (strain ATCC BAA-1114 / GMI1000) (Ralstonia solanacearum).